Here is a 264-residue protein sequence, read N- to C-terminus: MSEEMVYFSGLSDALRITFVQMMILSAIAIVIFLYGMIITLQKWGSGATGYALEPQEGKRGSAITFLKTWWKQVTEKSPHGHGKPILEILILDILFQRRILKRSGLRWVMHILIFAGWMTLFALSGLMFSVELTHMIGIELPFTPHMFREWLSIPNYIFGYILLIGVLIAIVRRLFVSEVREASIMYDWVLIGVVFLVTISGFLADGIRTGLIWDFGLDPSLAPPAALFHSVISLLFCIAFIPYSKYIHIIAIPLALLANKGGE.

5 helical membrane-spanning segments follow: residues 19–39 (FVQM…GMII), 109–129 (VMHI…GLMF), 152–172 (LSIP…IAIV), 185–205 (IMYD…GFLA), and 222–242 (LAPP…IAFI).

The protein belongs to the HdrE family. In terms of assembly, the dihydromethanophenazine:CoB--CoM heterodisulfide reductase is composed of two subunits; HdrD and HdrE. Heme b is required as a cofactor.

It localises to the cell membrane. The enzyme catalyses methanophenazine + coenzyme B + coenzyme M = dihydromethanophenazine + coenzyme M-coenzyme B heterodisulfide. Its pathway is cofactor metabolism; coenzyme M-coenzyme B heterodisulfide reduction; coenzyme B and coenzyme M from coenzyme M-coenzyme B heterodisulfide: step 1/1. In terms of biological role, part of a complex that catalyzes the reversible reduction of CoM-S-S-CoB to the thiol-coenzymes H-S-CoM (coenzyme M) and H-S-CoB (coenzyme B). HdrE may be responsible for anchoring the complex to the membrane. Electrons probably transfer from phenazine to the high potential 4Fe cluster in HdrD subunit, then to the low potential heme in HdrE subunit and finally to CoM-S-S-CoB. The protein is Dihydromethanophenazine:CoB--CoM heterodisulfide reductase subunit E (hdrE) of Methanosarcina thermophila (strain ATCC 43570 / DSM 1825 / OCM 12 / VKM B-1830 / TM-1).